We begin with the raw amino-acid sequence, 392 residues long: Esterase EstB (392 aa).

The active-site Acyl-ester intermediate is the serine 75.

The protein belongs to the class-A beta-lactamase family.

The protein resides in the cytoplasm. With respect to regulation, strongly inhibited by eserin, NaF, HgCl2, SDS and Triton X-100. Its function is as follows. Acts on short-chain (C4-C6) fatty acid esters and triglycerides, including tertiary alcohol esters. Activity on p-nitrophenyl esters is generally higher than on o-nitrophenyl esters. Lacks beta-lactamase activity; it hydrolyzes the ester bond of cephalosporin substrates but there is no opening of the beta-lactam ring observed. This chain is Esterase EstB (estB), found in Burkholderia gladioli (Pseudomonas marginata).